The following is a 339-amino-acid chain: NmrA-like family domain-containing oxidoreductase cpsB (339 aa).

Position 142 (Lys-142) interacts with NADP(+).

Belongs to the NmrA-type oxidoreductase family.

It catalyses the reaction didehydrocampesine A + 2 AH2 = campesine A + 2 A. It functions in the pathway alkaloid biosynthesis. Functionally, oxidoreductase; part of the gene cluster that mediates the biosynthesis of campesine G, a dimeric indole piperazine alkaloid that shows good insecticidal activity Galleria mellonella. Within the pathway, cpsB reduces the unstable (S,S)-trypyl-valyl dihydropiperazine (didehydrocampesine A) intermediate to (S, S)-trypyl-valyl-piperazine (campesine A) using two equivalents of NAD(P)H. The non-canonical non-ribosomal peptide synthetase cpsA catalyzes the first steps of the pathway by producing L-tryptophanal and L-valinal from their respective amino-acids. These products condensate spontaneously to form trypyl-valyl pyrazine also known as didehydrocampesine A. The NmrA-like family domain-containing oxidoreductase cpsB is the next enzyme in cps pathway and reduces the unstable didehydrocampesine A to campesine A. The methyltransferase cpsF and the acetyltransferase cpsE both recognize N13 of piperazine ring to carry out methylation and acetylation of campesine A to produce campesine C and B, respectively. The cytochrome P450 monooxygenase cpsD then acts as a dimerase that catalyzes oxidative heterocoupling between campesine B and C to produce heterodimers with unexpected 6/5/6/6/6/6/5/6 eight-ring scaffold called campesine D. Finally,the cytochrome P450 monooxygenase cpsC is a regioselective dehydrogenase that catalyzes dehydrogenation reaction towards C2-N1 to produce campesine G. This chain is NmrA-like family domain-containing oxidoreductase cpsB, found in Aspergillus campestris (strain IBT 28561).